We begin with the raw amino-acid sequence, 360 residues long: Peptide chain release factor 1 (360 aa).

Gln235 is subject to N5-methylglutamine.

This sequence belongs to the prokaryotic/mitochondrial release factor family. In terms of processing, methylated by PrmC. Methylation increases the termination efficiency of RF1.

It localises to the cytoplasm. Functionally, peptide chain release factor 1 directs the termination of translation in response to the peptide chain termination codons UAG and UAA. The protein is Peptide chain release factor 1 of Paraburkholderia phymatum (strain DSM 17167 / CIP 108236 / LMG 21445 / STM815) (Burkholderia phymatum).